We begin with the raw amino-acid sequence, 235 residues long: Ubiquinone biosynthesis O-methyltransferase (235 aa).

Residues R39, G59, D80, and M124 each coordinate S-adenosyl-L-methionine.

Belongs to the methyltransferase superfamily. UbiG/COQ3 family.

It carries out the reaction a 3-demethylubiquinol + S-adenosyl-L-methionine = a ubiquinol + S-adenosyl-L-homocysteine + H(+). The enzyme catalyses a 3-(all-trans-polyprenyl)benzene-1,2-diol + S-adenosyl-L-methionine = a 2-methoxy-6-(all-trans-polyprenyl)phenol + S-adenosyl-L-homocysteine + H(+). The protein operates within cofactor biosynthesis; ubiquinone biosynthesis. In terms of biological role, O-methyltransferase that catalyzes the 2 O-methylation steps in the ubiquinone biosynthetic pathway. This Photobacterium profundum (strain SS9) protein is Ubiquinone biosynthesis O-methyltransferase.